The primary structure comprises 31 residues: Cytochrome b6-f complex subunit 6 (31 aa).

Residues 3-23 (VAIDYFLLVGFCFAVTSGLWI) traverse the membrane as a helical segment.

The protein belongs to the PetL family. In terms of assembly, the 4 large subunits of the cytochrome b6-f complex are cytochrome b6, subunit IV (17 kDa polypeptide, PetD), cytochrome f and the Rieske protein, while the 4 small subunits are PetG, PetL, PetM and PetN. The complex functions as a dimer.

The protein localises to the plastid. It is found in the chloroplast thylakoid membrane. In terms of biological role, component of the cytochrome b6-f complex, which mediates electron transfer between photosystem II (PSII) and photosystem I (PSI), cyclic electron flow around PSI, and state transitions. PetL is important for photoautotrophic growth as well as for electron transfer efficiency and stability of the cytochrome b6-f complex. The protein is Cytochrome b6-f complex subunit 6 of Phaeodactylum tricornutum (strain CCAP 1055/1).